The chain runs to 316 residues: Beta-ketoacyl-[acyl-carrier-protein] synthase III 4 (316 aa).

Residues C114 and H242 contribute to the active site. The tract at residues 243–247 (QANLR) is ACP-binding. N272 is an active-site residue.

The protein belongs to the thiolase-like superfamily. FabH family. In terms of assembly, homodimer.

It localises to the cytoplasm. It catalyses the reaction malonyl-[ACP] + acetyl-CoA + H(+) = 3-oxobutanoyl-[ACP] + CO2 + CoA. Its pathway is lipid metabolism; fatty acid biosynthesis. Functionally, catalyzes the condensation reaction of fatty acid synthesis by the addition to an acyl acceptor of two carbons from malonyl-ACP. Catalyzes the first condensation reaction which initiates fatty acid synthesis and may therefore play a role in governing the total rate of fatty acid production. Possesses both acetoacetyl-ACP synthase and acetyl transacylase activities. Its substrate specificity determines the biosynthesis of branched-chain and/or straight-chain of fatty acids. This chain is Beta-ketoacyl-[acyl-carrier-protein] synthase III 4, found in Streptomyces coelicolor (strain ATCC BAA-471 / A3(2) / M145).